The following is a 135-amino-acid chain: Small ribosomal subunit protein uS11 (135 aa).

Residues 1–11 show a composition bias toward low complexity; that stretch reads MPPKARAGAAV. The segment at 1-22 is disordered; sequence MPPKARAGAAVKKVRRKERKNV.

This sequence belongs to the universal ribosomal protein uS11 family. Part of the 30S ribosomal subunit. Interacts with proteins S7 and S18. Binds to IF-3.

Functionally, located on the platform of the 30S subunit, it bridges several disparate RNA helices of the 16S rRNA. Forms part of the Shine-Dalgarno cleft in the 70S ribosome. This Salinispora tropica (strain ATCC BAA-916 / DSM 44818 / JCM 13857 / NBRC 105044 / CNB-440) protein is Small ribosomal subunit protein uS11.